The sequence spans 108 residues: MFRSLFLAAALMAFTPLAANAGEITLLPSIKLQIGDRDHYGNYWDGGHWRDRDYWHRNYEWRKNRWWRHDNGYHRGWDKRKAYERGYREGWRDRDDHRGKGRGHGHRH.

Residues 1–21 (MFRSLFLAAALMAFTPLAANA) form the signal peptide.

It to E.coli YaaX.

This is an uncharacterized protein from Escherichia coli O157:H7.